Here is a 501-residue protein sequence, read N- to C-terminus: Glycerol kinase (501 aa).

An ADP-binding site is contributed by Thr-12. ATP-binding residues include Thr-12, Thr-13, and Ser-14. A sn-glycerol 3-phosphate-binding site is contributed by Thr-12. Arg-16 lines the ADP pocket. Sn-glycerol 3-phosphate contacts are provided by Arg-82, Glu-83, Tyr-134, and Asp-244. Glycerol is bound by residues Arg-82, Glu-83, Tyr-134, Asp-244, and Gln-245. Thr-266 and Gly-310 together coordinate ADP. Residues Thr-266, Gly-310, Gln-314, and Gly-411 each coordinate ATP. Gly-411 and Asn-415 together coordinate ADP.

The protein belongs to the FGGY kinase family.

It carries out the reaction glycerol + ATP = sn-glycerol 3-phosphate + ADP + H(+). Its pathway is polyol metabolism; glycerol degradation via glycerol kinase pathway; sn-glycerol 3-phosphate from glycerol: step 1/1. With respect to regulation, inhibited by fructose 1,6-bisphosphate (FBP). Functionally, key enzyme in the regulation of glycerol uptake and metabolism. Catalyzes the phosphorylation of glycerol to yield sn-glycerol 3-phosphate. The protein is Glycerol kinase of Methylorubrum extorquens (strain PA1) (Methylobacterium extorquens).